Here is a 520-residue protein sequence, read N- to C-terminus: Nonsense-mediated mRNA decay factor SMG9 (520 aa).

A disordered region spans residues 1 to 143 (MSESGHSQPG…KGEKEGQRPT (143 aa)). N-acetylserine is present on serine 2. Serine 2, serine 4, serine 7, serine 32, and serine 53 each carry phosphoserine. Residues 36–53 (GRERDYIAPWERERRDGS) are compositionally biased toward basic and acidic residues. Pro residues-rich tracts occupy residues 78 to 94 (QPPP…PAPL) and 122 to 133 (TAPPPPTAPAPP). Serine 451 carries the phosphoserine modification.

It belongs to the SMG9 family. Self-associates to form homodimers and forms heterodimers with SMG8; these assembly forms may represent SMG1C intermediate forms. Component of the SMG1C complex composed of SMG1, SMG8 and SMG9. Interacts with DHX34; the interaction is RNA-independent. Post-translationally, phosphorylated by SMG1.

Functionally, involved in nonsense-mediated decay (NMD) of mRNAs containing premature stop codons. Is recruited by release factors to stalled ribosomes together with SMG1 and SMG8 (forming the SMG1C protein kinase complex) and, in the SMG1C complex, is required for the efficient association between SMG1 and SMG8. Plays a role in brain, heart, and eye development. The sequence is that of Nonsense-mediated mRNA decay factor SMG9 from Mus musculus (Mouse).